The sequence spans 71 residues: Sec-independent protein translocase protein TatA (71 aa).

A helical transmembrane segment spans residues 1–21 (MGSFSMGHWLIVLAIIVLLFG). Basic and acidic residues predominate over residues 41–57 (KEMEDETPVEKIEKADS). The disordered stretch occupies residues 41 to 71 (KEMEDETPVEKIEKADSETQSTKQNETTKNV). Residues 58–71 (ETQSTKQNETTKNV) are compositionally biased toward polar residues.

This sequence belongs to the TatA/E family. As to quaternary structure, the Tat system comprises two distinct complexes: a TatABC complex, containing multiple copies of TatA, TatB and TatC subunits, and a separate TatA complex, containing only TatA subunits. Substrates initially bind to the TatABC complex, which probably triggers association of the separate TatA complex to form the active translocon.

It is found in the cell inner membrane. In terms of biological role, part of the twin-arginine translocation (Tat) system that transports large folded proteins containing a characteristic twin-arginine motif in their signal peptide across membranes. TatA could form the protein-conducting channel of the Tat system. This is Sec-independent protein translocase protein TatA from Campylobacter fetus subsp. fetus (strain 82-40).